Consider the following 1259-residue polypeptide: Ankyrin repeat and sterile alpha motif domain-containing protein 1B (1259 aa).

ANK repeat units lie at residues 2-31 (GKDQ…GGIL), 58-87 (SGYT…STNV), 91-120 (KGYF…SHSR), 127-156 (ENET…DPTI), 160-189 (KLET…NLMS), 193-222 (RKHT…DVSC), and 225-254 (EKGS…DANI). Positions 298–325 (HAQEDTAQETHLSSPAESPQKTKSETVT) are disordered. Over residues 306-325 (ETHLSSPAESPQKTKSETVT) the composition is skewed to polar residues. Phosphoserine is present on residues Ser310, Ser311, Ser315, Ser353, and Ser364. Disordered regions lie at residues 367–401 (ELGK…SCGP), 490–513 (PGTS…SPDT), 556–614 (CTSF…GSSP), and 631–661 (TCED…EPSV). A compositionally biased stretch (polar residues) spans 371-384 (NGSQSVRTSSTINL). Thr503 carries the phosphothreonine modification. Phosphoserine occurs at positions 507 and 510. A compositionally biased stretch (low complexity) spans 556–574 (CTSFTSSPAASPPTSSVET). Positions 575 to 587 (TEVKNEGAEHADD) are enriched in basic and acidic residues. The residue at position 738 (Ser738) is a Phosphoserine. The tract at residues 753 to 776 (VNWSKSSTAERSSKDNSERTPSFT) is disordered. Residue Thr772 is modified to Phosphothreonine. Ser774 bears the Phosphoserine mark. SAM domains follow at residues 809 to 875 (CPVQ…LPKM) and 883 to 948 (YHPT…RLHD). The residue at position 900 (Tyr900) is a Phosphotyrosine. Residue His934 is a short sequence motif, nuclear localization signal. Positions 943–988 (GDRLHDDPPQKPPRSITLREPSGNHTPPQLSPSLSQSTYTTGGSLD) are disordered. A compositionally biased stretch (low complexity) spans 968–983 (TPPQLSPSLSQSTYTT). Ser973 carries the phosphoserine modification. Residue Tyr1006 is modified to Phosphotyrosine. The region spanning 1055-1212 (IFQSCDYKAF…SFENKPSKPI (158 aa)) is the PID domain. Residues 1196 to 1216 (HSSTLPESFENKPSKPIPKPR) form a disordered region.

Interacts with EPHA8. Isoform 2 interacts with COIL.

The protein localises to the cytoplasm. Its subcellular location is the nucleus. It localises to the postsynaptic density. It is found in the cell projection. The protein resides in the dendritic spine. Its function is as follows. Isoform 2 may participate in the regulation of nucleoplasmic coilin protein interactions in neuronal and transformed cells. In Mus musculus (Mouse), this protein is Ankyrin repeat and sterile alpha motif domain-containing protein 1B (Anks1b).